The following is a 371-amino-acid chain: Alanine dehydrogenase (371 aa).

Positions 15 and 75 each coordinate substrate. The active-site Proton donor/acceptor is histidine 96. NAD(+)-binding positions include serine 134, 178 to 179 (TA), aspartate 198, serine 220, 239 to 240 (VL), 267 to 270 (IAID), arginine 279, and 298 to 301 (VANM). Aspartate 270 functions as the Proton donor/acceptor in the catalytic mechanism.

This sequence belongs to the AlaDH/PNT family. As to quaternary structure, homohexamer. Trimer of dimers.

The protein localises to the cytoplasm. The catalysed reaction is L-alanine + NAD(+) + H2O = pyruvate + NH4(+) + NADH + H(+). The protein operates within amino-acid degradation; L-alanine degradation via dehydrogenase pathway; NH(3) and pyruvate from L-alanine: step 1/1. Its function is as follows. Catalyzes the reversible reductive amination of pyruvate to L-alanine. Required for proficient utilization of D- or L-alanine as a nitrogen source. May be required for the adaptation from aerobic growth to anaerobic dormancy. It could be involved in the maintenance of the NAD pool during the shift to an anaerobic dormant state in which oxygen as a terminal electron acceptor becomes limiting. The polypeptide is Alanine dehydrogenase (Mycolicibacterium smegmatis (strain ATCC 700084 / mc(2)155) (Mycobacterium smegmatis)).